The following is a 369-amino-acid chain: tRNA/tmRNA (uracil-C(5))-methyltransferase (369 aa).

The S-adenosyl-L-methionine site is built by Gln193, Tyr221, Asn226, Glu242, and Asp302. Cys327 serves as the catalytic Nucleophile. Glu361 functions as the Proton acceptor in the catalytic mechanism.

It belongs to the class I-like SAM-binding methyltransferase superfamily. RNA M5U methyltransferase family. TrmA subfamily.

The catalysed reaction is uridine(54) in tRNA + S-adenosyl-L-methionine = 5-methyluridine(54) in tRNA + S-adenosyl-L-homocysteine + H(+). The enzyme catalyses uridine(341) in tmRNA + S-adenosyl-L-methionine = 5-methyluridine(341) in tmRNA + S-adenosyl-L-homocysteine + H(+). Functionally, dual-specificity methyltransferase that catalyzes the formation of 5-methyluridine at position 54 (m5U54) in all tRNAs, and that of position 341 (m5U341) in tmRNA (transfer-mRNA). This Sulfurimonas denitrificans (strain ATCC 33889 / DSM 1251) (Thiomicrospira denitrificans (strain ATCC 33889 / DSM 1251)) protein is tRNA/tmRNA (uracil-C(5))-methyltransferase.